A 635-amino-acid chain; its full sequence is MKNHRNKTVRDVTKLSGKPLPETLEPSSILQGTPTEQWVTSKDLLEDGLPFIPEVMKDLTVFLLGNININSTHLFRADILYDSQGVLSTPQQKELSFAQTGNTSVETTTDAEDRVEPIVAAEVAGFNLTRTVVRRLIPRNPKLDRPLEQTCHFYEADIAPGSEGATQESRLRRFLAVYTPHVASKEEIPFYHPLLRALAYLYDFTDDAAEATEAGSGSGALSLHFLPYPEEALPTRLERTLHALLNTQIRLARNTRLSETTEGGNYNPSKDNVIPQHLVQNTYSRLKFKYGKDLCRDWVEDTEPTKHVFEDLAITAFLIELWRSMYGAVPGEERNEDGPEKYDPNFPGFVDVACGNGVLVYVLLMEGYRGWGFDARRRKTWKILPEFVQARLKEEIYIPKPFTDAMAERGGVPDLGVETHSGLFEKDTFIISNHADELTVWTPLMATLACPESPLPFIAIPCCSHALSGAKYRYPPPKASKPDSDKESSQHEDVDSEQPATGDLKALRKAKQEAQTDVGFYKSMYGSLTMKAISIAEEIGYDVEKTLLRIPSTRNMGVIGGRKRVTKEWRARNQQQPASDCNGDAVTESALDKAMAAVQRECSRDGGVEGAAKIWVERAKGIHKGQGPGNQRGHC.

Disordered regions lie at residues 1-28 (MKNHRNKTVRDVTKLSGKPLPETLEPSS) and 474-509 (YPPPKASKPDSDKESSQHEDVDSEQPATGDLKALRK). A compositionally biased stretch (basic and acidic residues) spans 480–493 (SKPDSDKESSQHED).

The protein belongs to the TRM44 family.

The protein localises to the cytoplasm. It carries out the reaction uridine(44) in tRNA(Ser) + S-adenosyl-L-methionine = 2'-O-methyluridine(44) in tRNA(Ser) + S-adenosyl-L-homocysteine + H(+). Probable adenosyl-L-methionine (AdoMet)-dependent tRNA (uracil-O(2)-)-methyltransferase. This chain is tRNA (uracil-O(2)-)-methyltransferase (trm44), found in Aspergillus oryzae (strain ATCC 42149 / RIB 40) (Yellow koji mold).